Reading from the N-terminus, the 320-residue chain is Retron Ec86 reverse transcriptase (320 aa).

The 215-residue stretch at 34-248 (VETLRLLIYT…SQRKVTGLVI (215 aa)) folds into the Reverse transcriptase domain. Residues Asp119, Asp197, and Asp198 each coordinate Mg(2+). The necessary and required for recognition and binding of RNA stretch occupies residues 230–320 (KKTCISGPRS…GKNPLNKAKT (91 aa)).

This sequence belongs to the bacterial reverse transcriptase family.

It catalyses the reaction DNA(n) + a 2'-deoxyribonucleoside 5'-triphosphate = DNA(n+1) + diphosphate. Functionally, reverse transcriptase (RT) component of antiviral defense system retron Ec86, composed of a non-coding RNA (ncRNA), a ribosyltransferase/DNA-binding protein and this RT. Expression of the 3-gene retron confers protection against bacteriophage T5. At multiplicity of infection (MOI) of 0.02 cultures grow normally when infected with T5 without collapsing, at MOI 2 cultures enter growth stasis. Responsible for synthesis of msDNA (a branched molecule with RNA linked by a 2',5'-phosphodiester bond to ssDNA). The retron transcript serves as primer (from a conserved internal G residue) and template for the reaction, and codes for the RT. Recognizes only its cognate RNA as a primer template. Overexpression of the ncRNA and RT (without the ribosyltransferase), which leads to increased levels of msDNA, is mutagenic in vivo. This may be due to a mismatch in the msDNA stem which binds and sequesters MutS and/or MutL. The polypeptide is Retron Ec86 reverse transcriptase (Escherichia coli).